The chain runs to 218 residues: DNA-directed RNA polymerase III subunit RPC7-like (218 aa).

Residues 133–218 (LPKRPPKTTE…SDDNMDEAIY (86 aa)) are disordered. Residues 139–160 (KTTEDKEETIQKLETLEKKEEE) are compositionally biased toward basic and acidic residues. Composition is skewed to acidic residues over residues 161 to 193 (VTSE…EETD) and 201 to 218 (NGED…EAIY).

The protein belongs to the eukaryotic RPC7 RNA polymerase subunit family. As to quaternary structure, component of the RNA polymerase III (Pol III) complex consisting of 17 subunits. Pol III exists as two alternative complexes defined by the mutually exclusive incorporation of subunit POLR3G/RPC7alpha or POLR3GL/RPC7beta. Found in a trimeric complex with POLR3C/RPC3 and POLR3F/RPC6. Directly interacts with POLR3C. Widely expressed. Expressed in CD4-positive T cells.

It localises to the nucleus. Its function is as follows. DNA-dependent RNA polymerase catalyzes the transcription of DNA into RNA using the four ribonucleoside triphosphates as substrates. Specific peripheric component of RNA polymerase III which synthesizes small RNAs, such as 5S rRNA and tRNAs. In Homo sapiens (Human), this protein is DNA-directed RNA polymerase III subunit RPC7-like.